The primary structure comprises 256 residues: UPF0246 protein HRM2_41860 (256 aa).

Belongs to the UPF0246 family.

This is UPF0246 protein HRM2_41860 from Desulforapulum autotrophicum (strain ATCC 43914 / DSM 3382 / VKM B-1955 / HRM2) (Desulfobacterium autotrophicum).